The sequence spans 383 residues: Queuine tRNA-ribosyltransferase (383 aa).

D90 functions as the Proton acceptor in the catalytic mechanism. Substrate is bound by residues D90–F94, D144, Q193, and G227. The RNA binding stretch occupies residues G258 to D264. D277 functions as the Nucleophile in the catalytic mechanism. An RNA binding; important for wobble base 34 recognition region spans residues T282–R286. Zn(2+)-binding residues include C315, C317, C320, and H346.

This sequence belongs to the queuine tRNA-ribosyltransferase family. In terms of assembly, homodimer. Within each dimer, one monomer is responsible for RNA recognition and catalysis, while the other monomer binds to the replacement base PreQ1. It depends on Zn(2+) as a cofactor.

It carries out the reaction 7-aminomethyl-7-carbaguanine + guanosine(34) in tRNA = 7-aminomethyl-7-carbaguanosine(34) in tRNA + guanine. It participates in tRNA modification; tRNA-queuosine biosynthesis. In terms of biological role, catalyzes the base-exchange of a guanine (G) residue with the queuine precursor 7-aminomethyl-7-deazaguanine (PreQ1) at position 34 (anticodon wobble position) in tRNAs with GU(N) anticodons (tRNA-Asp, -Asn, -His and -Tyr). Catalysis occurs through a double-displacement mechanism. The nucleophile active site attacks the C1' of nucleotide 34 to detach the guanine base from the RNA, forming a covalent enzyme-RNA intermediate. The proton acceptor active site deprotonates the incoming PreQ1, allowing a nucleophilic attack on the C1' of the ribose to form the product. After dissociation, two additional enzymatic reactions on the tRNA convert PreQ1 to queuine (Q), resulting in the hypermodified nucleoside queuosine (7-(((4,5-cis-dihydroxy-2-cyclopenten-1-yl)amino)methyl)-7-deazaguanosine). This Ralstonia nicotianae (strain ATCC BAA-1114 / GMI1000) (Ralstonia solanacearum) protein is Queuine tRNA-ribosyltransferase.